The chain runs to 62 residues: Small ribosomal subunit protein bS21 (62 aa).

A compositionally biased stretch (basic and acidic residues) spans 43-52 (VKKKLKSEAA). The disordered stretch occupies residues 43–62 (VKKKLKSEAARKRKNRRRFK). The segment covering 53–62 (RKRKNRRRFK) has biased composition (basic residues).

This sequence belongs to the bacterial ribosomal protein bS21 family.

This chain is Small ribosomal subunit protein bS21, found in Lactiplantibacillus plantarum (strain ATCC BAA-793 / NCIMB 8826 / WCFS1) (Lactobacillus plantarum).